The following is a 353-amino-acid chain: GTPase Obg (353 aa).

Residues 1–159 (MKFIDEATIK…FELYLELKVL (159 aa)) enclose the Obg domain. The region spanning 160–332 (ADVGLLGMPN…LTYAIMEHVE (173 aa)) is the OBG-type G domain. Residues 166–173 (GMPNAGKS), 191–195 (FTTLH), 213–216 (DVPG), 284–287 (NKVD), and 313–315 (SAL) each bind GTP. The Mg(2+) site is built by serine 173 and threonine 193.

It belongs to the TRAFAC class OBG-HflX-like GTPase superfamily. OBG GTPase family. As to quaternary structure, monomer. It depends on Mg(2+) as a cofactor.

Its subcellular location is the cytoplasm. In terms of biological role, an essential GTPase which binds GTP, GDP and possibly (p)ppGpp with moderate affinity, with high nucleotide exchange rates and a fairly low GTP hydrolysis rate. Plays a role in control of the cell cycle, stress response, ribosome biogenesis and in those bacteria that undergo differentiation, in morphogenesis control. The chain is GTPase Obg from Methylobacillus flagellatus (strain ATCC 51484 / DSM 6875 / VKM B-1610 / KT).